Reading from the N-terminus, the 500-residue chain is Protein nucleotidyltransferase YdiU (500 aa).

ATP contacts are provided by Gly96, Gly98, Arg99, Lys119, Asp131, Gly132, Arg182, and Arg189. Asp258 (proton acceptor) is an active-site residue. Mg(2+)-binding residues include Asn259 and Asp268. Asp268 serves as a coordination point for ATP.

This sequence belongs to the SELO family. Mg(2+) serves as cofactor. The cofactor is Mn(2+).

The enzyme catalyses L-seryl-[protein] + ATP = 3-O-(5'-adenylyl)-L-seryl-[protein] + diphosphate. The catalysed reaction is L-threonyl-[protein] + ATP = 3-O-(5'-adenylyl)-L-threonyl-[protein] + diphosphate. It catalyses the reaction L-tyrosyl-[protein] + ATP = O-(5'-adenylyl)-L-tyrosyl-[protein] + diphosphate. It carries out the reaction L-histidyl-[protein] + UTP = N(tele)-(5'-uridylyl)-L-histidyl-[protein] + diphosphate. The enzyme catalyses L-seryl-[protein] + UTP = O-(5'-uridylyl)-L-seryl-[protein] + diphosphate. The catalysed reaction is L-tyrosyl-[protein] + UTP = O-(5'-uridylyl)-L-tyrosyl-[protein] + diphosphate. Functionally, nucleotidyltransferase involved in the post-translational modification of proteins. It can catalyze the addition of adenosine monophosphate (AMP) or uridine monophosphate (UMP) to a protein, resulting in modifications known as AMPylation and UMPylation. The protein is Protein nucleotidyltransferase YdiU of Rhizobium leguminosarum bv. trifolii (strain WSM2304).